We begin with the raw amino-acid sequence, 273 residues long: Pantothenate synthetase (273 aa).

27–34 (MGALHDGH) is an ATP binding site. The active-site Proton donor is histidine 34. Glutamine 58 is a (R)-pantoate binding site. Beta-alanine is bound at residue glutamine 58. 144-147 (GKKD) contributes to the ATP binding site. Glutamine 150 contributes to the (R)-pantoate binding site. Residues valine 173 and 181 to 184 (LSSR) each bind ATP.

Belongs to the pantothenate synthetase family. Homodimer.

The protein resides in the cytoplasm. It carries out the reaction (R)-pantoate + beta-alanine + ATP = (R)-pantothenate + AMP + diphosphate + H(+). Its pathway is cofactor biosynthesis; (R)-pantothenate biosynthesis; (R)-pantothenate from (R)-pantoate and beta-alanine: step 1/1. In terms of biological role, catalyzes the condensation of pantoate with beta-alanine in an ATP-dependent reaction via a pantoyl-adenylate intermediate. The chain is Pantothenate synthetase from Campylobacter curvus (strain 525.92).